The primary structure comprises 459 residues: Serine permease SerP1 (459 aa).

Transmembrane regions (helical) follow at residues 19–39 (IQLI…AGKT), 42–62 (MTGP…FFFL), 97–117 (SYWL…GTYI), 119–139 (FWLP…LLFG), 153–173 (FWFA…AIIL), 212–232 (FVGA…IGMT), 254–274 (ILLF…WHYI), 281–301 (FVIV…NFVV), 341–361 (AGIP…APVL), 370–390 (AFNF…FITL), 412–432 (PTIA…SLFF), and 436–456 (TFYP…YSHF).

The protein belongs to the amino acid-polyamine-organocation (APC) superfamily. Amino acid transporter (AAT) (TC 2.A.3.1) family.

It localises to the cell membrane. Functionally, transports L-serine, L-threonine and L-cysteine with high affinity. Stereoselective, with a strong preference for L-serine. Is the main L-serine transporter and is responsible for optimal growth in media containing free amino acids as the sole source of amino acids. Is also the main transporter for L-threonine. The sequence is that of Serine permease SerP1 from Lactococcus lactis subsp. cremoris (strain MG1363).